Consider the following 272-residue polypeptide: Undecaprenyl-diphosphatase (272 aa).

A run of 7 helical transmembrane segments spans residues 22–42 (FLPVSSTGHMIIVGHMLGFTG), 45–65 (AETFEVIIQLGSILAVVVVFW), 92–112 (SHIILAMLPAVTLGLMFHDVI), 118–138 (PQSVMYALVIGGVLLITAEIL), 189–209 (YTASEFSFILAVPMMMGASGL), 228–248 (VGFVTAFVVALVAIKTFLALI), and 251–271 (ISFIPFAIYRFIVAAAVYWVF).

Belongs to the UppP family.

It localises to the cell inner membrane. It carries out the reaction di-trans,octa-cis-undecaprenyl diphosphate + H2O = di-trans,octa-cis-undecaprenyl phosphate + phosphate + H(+). Catalyzes the dephosphorylation of undecaprenyl diphosphate (UPP). Confers resistance to bacitracin. The chain is Undecaprenyl-diphosphatase from Photorhabdus laumondii subsp. laumondii (strain DSM 15139 / CIP 105565 / TT01) (Photorhabdus luminescens subsp. laumondii).